Reading from the N-terminus, the 276-residue chain is Bifunctional esterase/perhydrolase DCH (276 aa).

The AB hydrolase-1 domain occupies 23-254; it reads PVIFFHHGWP…NGKLISYPGF (232 aa). Catalysis depends on residues Ser97, Asp227, and His256.

It belongs to the AB hydrolase superfamily. Bacterial non-heme haloperoxidase / perhydrolase family. In terms of assembly, homodimer.

It carries out the reaction 3,4-dihydrocoumarin + H2O = 3-(2-hydroxyphenyl)propanoate + H(+). The enzyme catalyses peracetic acid + H2O = acetate + H2O2 + H(+). The catalysed reaction is a percarboxylic acid + H2O = a carboxylate + H2O2 + H(+). With respect to regulation, inhibited by the serine protease inhibitors diisopropyl fluorophosphate and phenylmethanesulfonyl fluoride. Multifunctional enzyme, which shows esterase and perhydrolase activities, and is capable of organic acid-assisted bromination of organic compounds. Catalyzes the hydrolysis of 3,4-dihydrocoumarin. Aromatic lactones other than 3,4-dihydrocoumarin, such as 2-coumaranone and homogentisic acid lactone, are also substrates, but their activities relative to that of 3,4-dihydrocoumarin are quite low. Also catalyzes the hydrolysis of several linear esters, with specificity toward methyl esters. In addition, shows perhydrolase activity and catalyzes the dose- and time-dependent degradation of peracetic acid, a broad-spectrum biocide, to acetic acid and hydrogen peroxide. It suggests that in vivo DCH may play a role in the oxidative stress defense system and detoxify peroxoacids in conjunction with the catalase, i.e. peroxoacids are first hydrolyzed to the corresponding acids and hydrogen peroxide by DCH, and then the resulting hydrogen peroxide is degraded by the catalase. Also shows organic acid-assisted bromination activity toward monochlorodimedon when incubated with hydrogen peroxide and dihydrocoumarin or an organic acid, such as acetate and n-butyrate. The chain is Bifunctional esterase/perhydrolase DCH from Acinetobacter calcoaceticus.